The chain runs to 309 residues: 4-hydroxy-3-methylbut-2-enyl diphosphate reductase (309 aa).

Position 12 (Cys12) interacts with [4Fe-4S] cluster. Residues His41 and His74 each contribute to the (2E)-4-hydroxy-3-methylbut-2-enyl diphosphate site. His41 and His74 together coordinate dimethylallyl diphosphate. Isopentenyl diphosphate is bound by residues His41 and His74. Residue Cys96 participates in [4Fe-4S] cluster binding. His124 contacts (2E)-4-hydroxy-3-methylbut-2-enyl diphosphate. Position 124 (His124) interacts with dimethylallyl diphosphate. His124 is a binding site for isopentenyl diphosphate. The active-site Proton donor is Glu126. Thr167 provides a ligand contact to (2E)-4-hydroxy-3-methylbut-2-enyl diphosphate. Position 197 (Cys197) interacts with [4Fe-4S] cluster. (2E)-4-hydroxy-3-methylbut-2-enyl diphosphate-binding residues include Ser225, Ser226, Asn227, and Ser269. Dimethylallyl diphosphate-binding residues include Ser225, Ser226, Asn227, and Ser269. Isopentenyl diphosphate contacts are provided by Ser225, Ser226, Asn227, and Ser269.

This sequence belongs to the IspH family. The cofactor is [4Fe-4S] cluster.

It catalyses the reaction isopentenyl diphosphate + 2 oxidized [2Fe-2S]-[ferredoxin] + H2O = (2E)-4-hydroxy-3-methylbut-2-enyl diphosphate + 2 reduced [2Fe-2S]-[ferredoxin] + 2 H(+). The catalysed reaction is dimethylallyl diphosphate + 2 oxidized [2Fe-2S]-[ferredoxin] + H2O = (2E)-4-hydroxy-3-methylbut-2-enyl diphosphate + 2 reduced [2Fe-2S]-[ferredoxin] + 2 H(+). It participates in isoprenoid biosynthesis; dimethylallyl diphosphate biosynthesis; dimethylallyl diphosphate from (2E)-4-hydroxy-3-methylbutenyl diphosphate: step 1/1. Its pathway is isoprenoid biosynthesis; isopentenyl diphosphate biosynthesis via DXP pathway; isopentenyl diphosphate from 1-deoxy-D-xylulose 5-phosphate: step 6/6. Its function is as follows. Catalyzes the conversion of 1-hydroxy-2-methyl-2-(E)-butenyl 4-diphosphate (HMBPP) into a mixture of isopentenyl diphosphate (IPP) and dimethylallyl diphosphate (DMAPP). Acts in the terminal step of the DOXP/MEP pathway for isoprenoid precursor biosynthesis. In Pseudoalteromonas translucida (strain TAC 125), this protein is 4-hydroxy-3-methylbut-2-enyl diphosphate reductase.